Consider the following 645-residue polypeptide: Sodium/potassium/calcium exchanger 3 (645 aa).

Residues 1–43 form the signal peptide; the sequence is MPPPGDQDCARRRSRRRRRDLLLSQLCFLASVALLLWSLSSLR. Residues 44–106 lie on the Extracellular side of the membrane; the sequence is EQKELDLMDL…DIFSNEDRRQ (63 aa). Residues N70 and N85 are each glycosylated (N-linked (GlcNAc...) asparagine). A helical membrane pass occupies residues 107–127; sequence GAVVLHVLCAMYMFYALAIVC. The Cytoplasmic portion of the chain corresponds to 128 to 151; the sequence is DDFFVPSLEKICERLHLSEDVAGA. One copy of the Alpha-1 repeat lies at 148–188; the sequence is VAGATFMAAGSSAPELFTSVIGVFITKGDVGVGTIVGSAVF. The helical transmembrane segment at 152–172 threads the bilayer; that stretch reads TFMAAGSSAPELFTSVIGVFI. The Extracellular portion of the chain corresponds to 173–181; that stretch reads TKGDVGVGT. Residues 182 to 202 form a helical membrane-spanning segment; the sequence is IVGSAVFNILCIIGVCGLFAG. Residues 203–209 lie on the Cytoplasmic side of the membrane; that stretch reads QVVALSS. The helical transmembrane segment at 210–230 threads the bilayer; the sequence is WCLLRDSIYYTLSVVALIVFI. Residues 231-234 lie on the Extracellular side of the membrane; sequence YDEK. The chain crosses the membrane as a helical span at residues 235-255; that stretch reads VSWWESLVLVLMYLIYIVIMK. Topologically, residues 256 to 486 are cytoplasmic; the sequence is YNACIHQCFE…WFMVTFASST (231 aa). S307 carries the post-translational modification Phosphoserine. Disordered stretches follow at residues 379–398 and 404–442; these read TVENGTGPSSAPDRGVNGTR and AETDNETENENEDNENNENDEEEEEDEDDDEGPYTPFDP. A compositionally biased stretch (acidic residues) spans 404-435; that stretch reads AETDNETENENEDNENNENDEEEEEDEDDDEG. Residues 487-507 form a helical membrane-spanning segment; sequence LWIAAFSYMMVWMVTIIGYTL. The Extracellular portion of the chain corresponds to 508 to 512; that stretch reads GIPDV. The chain crosses the membrane as a helical span at residues 513-533; that stretch reads IMGITFLAAGTSVPDCMASLI. An Alpha-2 repeat occupies 520–551; the sequence is AAGTSVPDCMASLIVARQGMGDMAVSNSIGSN. The Cytoplasmic portion of the chain corresponds to 534-551; sequence VARQGMGDMAVSNSIGSN. Residues 552–572 traverse the membrane as a helical segment; the sequence is VFDILIGLGLPWALQTLAVDY. Residues 573–582 lie on the Extracellular side of the membrane; it reads GSYIRLNSRG. A helical transmembrane segment spans residues 583–603; the sequence is LIYSVGLLLASVFVTVFGVHL. Topologically, residues 604-617 are cytoplasmic; that stretch reads NKWQLDKKLGCGCL. Residues 618-638 form a helical membrane-spanning segment; it reads FLYGVFLCFSIMTEFNVFTFV. Residues 639–645 lie on the Extracellular side of the membrane; that stretch reads NLPMCGD.

This sequence belongs to the Ca(2+):cation antiporter (CaCA) (TC 2.A.19) family. SLC24A subfamily. Abundant in the brain. Highest levels found in selected thalamic nuclei, hippocampal CA1 neurons and in layer IV of the cerebral cortex. Expressed in dental tissues.

The protein localises to the cell membrane. The catalysed reaction is Ca(2+)(out) + K(+)(out) + 4 Na(+)(in) = Ca(2+)(in) + K(+)(in) + 4 Na(+)(out). Calcium, potassium:sodium antiporter that transports 1 Ca(2+) and 1 K(+) in exchange for 4 Na(+). The sequence is that of Sodium/potassium/calcium exchanger 3 (Slc24a3) from Mus musculus (Mouse).